A 253-amino-acid polypeptide reads, in one-letter code: Cyclin-C1-1 (253 aa).

The protein belongs to the cyclin family. Cyclin C subfamily.

The chain is Cyclin-C1-1 (CYCC1-1) from Arabidopsis thaliana (Mouse-ear cress).